A 117-amino-acid polypeptide reads, in one-letter code: Large ribosomal subunit protein uL18 (117 aa).

Belongs to the universal ribosomal protein uL18 family. In terms of assembly, part of the 50S ribosomal subunit; part of the 5S rRNA/L5/L18/L25 subcomplex. Contacts the 5S and 23S rRNAs.

Functionally, this is one of the proteins that bind and probably mediate the attachment of the 5S RNA into the large ribosomal subunit, where it forms part of the central protuberance. This Methylococcus capsulatus (strain ATCC 33009 / NCIMB 11132 / Bath) protein is Large ribosomal subunit protein uL18.